A 176-amino-acid chain; its full sequence is NADH-quinone oxidoreductase subunit 10 (176 aa).

Transmembrane regions (helical) follow at residues 2–22 (SLLEGLALFLLLLSGVLVVTL), 26–46 (IHAALALILNFLVLAGVYVAL), 56–76 (VIVYAGAIVVLFLFVIMLLFA), 91–111 (PLAALLALGVAGILAAGLWGL), and 137–157 (FVLLAVGFLLMAATVVAVALV).

This sequence belongs to the complex I subunit 6 family. As to quaternary structure, NDH-1 is composed of 15 different subunits, Nqo1 to Nqo15. The complex has a L-shaped structure, with the hydrophobic arm (subunits Nqo7, Nqo8 and Nqo10 to Nqo14) embedded in the membrane and the hydrophilic peripheral arm (subunits Nqo1 to Nqo6, Nqo9 and Nqo15) protruding into the bacterial cytoplasm. The hydrophilic domain contains all the redox centers.

Its subcellular location is the cell inner membrane. The enzyme catalyses a quinone + NADH + 5 H(+)(in) = a quinol + NAD(+) + 4 H(+)(out). Functionally, NDH-1 shuttles electrons from NADH, via FMN and iron-sulfur (Fe-S) centers, to quinones in the respiratory chain. The immediate electron acceptor for the enzyme in this species is menaquinone. Couples the redox reaction to proton translocation (for every two electrons transferred, four hydrogen ions are translocated across the cytoplasmic membrane), and thus conserves the redox energy in a proton gradient required for the synthesis of ATP. This chain is NADH-quinone oxidoreductase subunit 10 (nqo10), found in Thermus thermophilus (strain ATCC 27634 / DSM 579 / HB8).